The primary structure comprises 334 residues: MDQSLIQEILEIVEQAAIASATLSGKGLKDEADALAVDAMRKRMNQINMQGKIVIGEGERDEAPMLYIGEEVGTGNGPGVDFAVDPCEGTNLCAYSQRGSMAVLAASDRGGLFNAPDFYMKKLAAPPAAKGKVDIRKSATENIKILSECLGLAPDELTIVVMDRARHKDLIAEIRATGARIQPISDGDVQAAIACGFAGTGTHCLMGIGAAPEGVISAAAMRALGGHFQGQLVYDPAIAQTSEWADMTKEGNLQRLAEMGITDPDKVYEASELACGEHVVFAGSGITDGLLFNGVKFEADCTRTSSLVISNMNNTCSFTTTIHMKDGAQSIALN.

Residues D33, E57, D85, and E88 each coordinate Mn(2+). Substrate-binding positions include 88–90 (EGT), Y119, 164–166 (RAR), and 186–188 (DGD). E213 provides a ligand contact to Mn(2+).

The protein belongs to the FBPase class 2 family. Homotetramer. Requires Mn(2+) as cofactor.

It catalyses the reaction beta-D-fructose 1,6-bisphosphate + H2O = beta-D-fructose 6-phosphate + phosphate. The enzyme catalyses D-sedoheptulose 1,7-bisphosphate + H2O = D-sedoheptulose 7-phosphate + phosphate. Its pathway is carbohydrate biosynthesis; Calvin cycle. Functionally, catalyzes the hydrolysis of fructose 1,6-bisphosphate (Fru 1,6-P2) and sedoheptulose 1,7-bisphosphate (Sed 1,7-P2) to fructose 6-phosphate and sedoheptulose 7-phosphate, respectively. The protein is D-fructose 1,6-bisphosphatase class 2/sedoheptulose 1,7-bisphosphatase of Synechococcus sp. (strain CC9902).